The primary structure comprises 196 residues: MSRRAEVTRNTSETQIRVALDLDGTGKQTLNTGVPFLDHMLDQIARHGMVDLDVTATGDTHIDDHHTVEDVGITLGQAVAKAIGDKKGIVRYGHSYVPLDEALSRVVIDFSGRPGLEFHVPFTRARVGSFDVDLSIEFFRGFVNHAGVTLHIDNLRGVNAHHQIETVFKAFGRALRMAVEIDPRAAGTIPSTKGAL.

Belongs to the imidazoleglycerol-phosphate dehydratase family.

The protein localises to the cytoplasm. The catalysed reaction is D-erythro-1-(imidazol-4-yl)glycerol 3-phosphate = 3-(imidazol-4-yl)-2-oxopropyl phosphate + H2O. It functions in the pathway amino-acid biosynthesis; L-histidine biosynthesis; L-histidine from 5-phospho-alpha-D-ribose 1-diphosphate: step 6/9. In Ralstonia nicotianae (strain ATCC BAA-1114 / GMI1000) (Ralstonia solanacearum), this protein is Imidazoleglycerol-phosphate dehydratase.